An 819-amino-acid polypeptide reads, in one-letter code: Nuclear pore complex protein Nup93 (819 aa).

Phosphothreonine is present on Thr49. A phosphoserine mark is found at Ser52, Ser66, Ser72, Ser75, Ser80, Ser430, and Ser767.

This sequence belongs to the nucleoporin interacting component (NIC) family. Part of the nuclear pore complex (NPC). Component of the p62 complex, a complex composed of NUP62 and NUP54. Forms a complex with NUP35, NUP155, NUP205 and lamin B; the interaction with NUP35 is direct. Does not interact with TPR. Interacts with SMAD4 and IPO7; translocates SMAD4 to the nucleus through the NPC upon BMP7 stimulation resulting in activation of SMAD4 signaling.

It is found in the nucleus membrane. Its subcellular location is the nucleus. It localises to the nuclear pore complex. The protein resides in the nucleus envelope. Functionally, plays a role in the nuclear pore complex (NPC) assembly and/or maintenance. May anchor nucleoporins, but not NUP153 and TPR, to the NPC. During renal development, regulates podocyte migration and proliferation through SMAD4 signaling. In Bos taurus (Bovine), this protein is Nuclear pore complex protein Nup93 (NUP93).